Consider the following 906-residue polypeptide: Protein translocase subunit SecA (906 aa).

Residues Gln89, 107 to 111 (GEGKT), and Asp502 contribute to the ATP site. Zn(2+)-binding residues include Cys890, Cys892, Cys901, and His902.

It belongs to the SecA family. In terms of assembly, monomer and homodimer. Part of the essential Sec protein translocation apparatus which comprises SecA, SecYEG and auxiliary proteins SecDF-YajC and YidC. Requires Zn(2+) as cofactor.

Its subcellular location is the cell inner membrane. It localises to the cytoplasm. The catalysed reaction is ATP + H2O + cellular proteinSide 1 = ADP + phosphate + cellular proteinSide 2.. Its function is as follows. Part of the Sec protein translocase complex. Interacts with the SecYEG preprotein conducting channel. Has a central role in coupling the hydrolysis of ATP to the transfer of proteins into and across the cell membrane, serving both as a receptor for the preprotein-SecB complex and as an ATP-driven molecular motor driving the stepwise translocation of polypeptide chains across the membrane. The polypeptide is Protein translocase subunit SecA (Brucella suis biovar 1 (strain 1330)).